The chain runs to 117 residues: Large ribosomal subunit protein bL20 (117 aa).

Belongs to the bacterial ribosomal protein bL20 family.

In terms of biological role, binds directly to 23S ribosomal RNA and is necessary for the in vitro assembly process of the 50S ribosomal subunit. It is not involved in the protein synthesizing functions of that subunit. The chain is Large ribosomal subunit protein bL20 from Streptococcus suis (strain 05ZYH33).